The following is a 148-amino-acid chain: uncharacterized protein (148 aa).

This is an uncharacterized protein from Acheta domesticus (House cricket).